We begin with the raw amino-acid sequence, 419 residues long: Delta(8)-fatty-acid desaturase (419 aa).

The 64-residue stretch at 1–64 folds into the Cytochrome b5 heme-binding domain; the sequence is MKSKRQALSP…LKRMPKINPS (64 aa). Heme contacts are provided by His24 and His47. The helical transmembrane segment at 110 to 130 threads the bilayer; sequence LGVLGYFLMVQYQMYFIGAVL. A Histidine box-1 motif is present at residues 143–147; the sequence is HDICH. Residues 156–176 form a helical membrane-spanning segment; it reads WNNLVGLVFGNGLQGFSVTCW. Positions 180-184 match the Histidine box-2 motif; it reads HNAHH. A run of 3 helical transmembrane segments spans residues 226-246, 266-286, and 290-310; these read YFLVICILLRFIWCFQCVLTV, IGLALHWTLKALFHLFFMPSI, and LLVFFVSELVGGFGIAIVVFM. The Histidine box-3 motif lies at 355 to 359; it reads QIEHH.

Belongs to the fatty acid desaturase type 1 family. It depends on Fe cation as a cofactor.

Its subcellular location is the membrane. The enzyme catalyses an (11Z,14Z)-icosadienoyl-containing glycerolipid + 2 Fe(II)-[cytochrome b5] + O2 + 2 H(+) = an (8Z,11Z,14Z)-icosatrienoyl-containing glycerolipid + 2 Fe(III)-[cytochrome b5] + 2 H2O. The catalysed reaction is an (11Z,14Z,17Z)-icosatrienoyl-containing glycerolipid + 2 Fe(II)-[cytochrome b5] + O2 + 2 H(+) = an (8Z,11Z,14Z,17Z)-eicosatetraenoyl-containing glycerolipid + 2 Fe(III)-[cytochrome b5] + 2 H2O. It carries out the reaction an (11Z)-eicosenoyl-containing glycerolipid + 2 Fe(II)-[cytochrome b5] + O2 + 2 H(+) = a (8Z,11Z)-eicosadienoyl-containing glycerolipid + 2 Fe(III)-[cytochrome b5] + 2 H2O. It participates in lipid metabolism; fatty acid metabolism. Functionally, delta(8)-fatty-acid desaturase which introduces a double bond at the 8-position in 20-carbon chain length fatty acids (C20) that have an existing delta-11 unsaturation (double bond). Whether it acts on CoA-linked substrates (as in animals) or phospholipid-linked substrates (as in plants and fungi) is still not clear. This Euglena gracilis protein is Delta(8)-fatty-acid desaturase (efd1).